The chain runs to 179 residues: Fas apoptotic inhibitory molecule 1 (179 aa).

At Thr2 the chain carries N-acetylthreonine.

The protein belongs to the FAIM1 family. Widely expressed, with the highest levels in brain, thymus, kidney, and spleen.

The protein localises to the cytoplasm. Its function is as follows. Plays a role as an inducible effector molecule that mediates Fas resistance produced by surface Ig engagement in B cells. In Mus musculus (Mouse), this protein is Fas apoptotic inhibitory molecule 1 (Faim).